A 286-amino-acid chain; its full sequence is Bifunctional protein FolD (286 aa).

NADP(+)-binding positions include G166–S168 and I232.

Belongs to the tetrahydrofolate dehydrogenase/cyclohydrolase family. In terms of assembly, homodimer.

The enzyme catalyses (6R)-5,10-methylene-5,6,7,8-tetrahydrofolate + NADP(+) = (6R)-5,10-methenyltetrahydrofolate + NADPH. It carries out the reaction (6R)-5,10-methenyltetrahydrofolate + H2O = (6R)-10-formyltetrahydrofolate + H(+). It functions in the pathway one-carbon metabolism; tetrahydrofolate interconversion. Functionally, catalyzes the oxidation of 5,10-methylenetetrahydrofolate to 5,10-methenyltetrahydrofolate and then the hydrolysis of 5,10-methenyltetrahydrofolate to 10-formyltetrahydrofolate. In Marinobacter nauticus (strain ATCC 700491 / DSM 11845 / VT8) (Marinobacter aquaeolei), this protein is Bifunctional protein FolD.